A 306-amino-acid polypeptide reads, in one-letter code: Pantothenate kinase (306 aa).

90-97 contacts ATP; it reads GSVAVGKS.

The protein belongs to the prokaryotic pantothenate kinase family.

It localises to the cytoplasm. It carries out the reaction (R)-pantothenate + ATP = (R)-4'-phosphopantothenate + ADP + H(+). The protein operates within cofactor biosynthesis; coenzyme A biosynthesis; CoA from (R)-pantothenate: step 1/5. The chain is Pantothenate kinase from Listeria monocytogenes serotype 4b (strain CLIP80459).